An 800-amino-acid chain; its full sequence is Phenylalanine--tRNA ligase beta subunit (800 aa).

One can recognise a tRNA-binding domain in the interval 39–154; it reads TKDIKNLVVG…ESQVPGTDAL (116 aa). Residues 408–483 form the B5 domain; it reads AFITPIDITA…RIYGYDDIPS (76 aa). 4 residues coordinate Mg(2+): Asp-461, Asp-467, Glu-470, and Glu-471. The FDX-ACB domain occupies 708-800; the sequence is PRFPGMSRDI…ALIEQGAVIR (93 aa).

The protein belongs to the phenylalanyl-tRNA synthetase beta subunit family. Type 1 subfamily. Tetramer of two alpha and two beta subunits. Mg(2+) is required as a cofactor.

The protein localises to the cytoplasm. The enzyme catalyses tRNA(Phe) + L-phenylalanine + ATP = L-phenylalanyl-tRNA(Phe) + AMP + diphosphate + H(+). The protein is Phenylalanine--tRNA ligase beta subunit of Staphylococcus aureus.